The primary structure comprises 555 residues: Myo-inositol transporter 2 (555 aa).

The Cytoplasmic segment spans residues 1–61 (MSSTLDTITP…NLVRAENEDK (61 aa)). Residues 62 to 82 (VTPYFMFLISVAAIAGFLFGY) traverse the membrane as a helical segment. The Extracellular portion of the chain corresponds to 83-108 (DTGIVGAALPMVGTSLGHTLSATESE). Residues 109-129 (IITAGTTIGAIFGASILGTMA) traverse the membrane as a helical segment. Residues 130–142 (DKLGRKWAMIISD) are Cytoplasmic-facing. The helical transmembrane segment at 143 to 163 (FAFTAGAIIIAASYSVPQIIV) threads the bilayer. The Extracellular portion of the chain corresponds to 164–165 (GR). Residues 166 to 186 (LVLGVGVGGAAVIAPLYIAEL) traverse the membrane as a helical segment. At 187–200 (APTAVRGRCVGANA) the chain is on the cytoplasmic side. Residues 201 to 221 (FCIPFGQVVASAIGAGFQAGV) form a helical membrane-spanning segment. Residues 222–228 (PYHIGWR) lie on the Extracellular side of the membrane. Residues 229 to 249 (VLFGLGVVPSVVQLCLMHFLP) traverse the membrane as a helical segment. At 250 to 328 (ESPRVLVLRG…AIISVSGVQA (79 aa)) the chain is on the cytoplasmic side. A helical membrane pass occupies residues 329–349 (FGQLTGFNTLLYYSGTIFGLL). Topologically, residues 350-355 (GLKNGA) are extracellular. The helical transmembrane segment at 356–376 (AAGLIPSCLNALFVFIGMSIV) threads the bilayer. Topologically, residues 377–385 (DKVGRRKLM) are cytoplasmic. The helical transmembrane segment at 386–406 (ITFIPGMMIAFTWTIISFHFL) threads the bilayer. The Extracellular segment spans residues 407–427 (TKPTGGLLLKDYQYSTPLVGS). Residues 428-448 (VLGSIVLFVIPFGLTYSHIIW) traverse the membrane as a helical segment. The Cytoplasmic segment spans residues 449–461 (YQSEFLPLEIRAA). Residues 462–482 (GSAISTTACWLANLVVSVAYL) traverse the membrane as a helical segment. The Extracellular segment spans residues 483–487 (TQLEK). The helical transmembrane segment at 488–508 (LGATGTYGLYLGFITIGYIFV) threads the bilayer. Residues 509–555 (YFCYPETKGLSIDETAEIFIDGFGIEKAHQMLREKRAFAAELYAGRA) are Cytoplasmic-facing.

It belongs to the major facilitator superfamily. Sugar transporter (TC 2.A.1.1) family.

It is found in the cell membrane. It catalyses the reaction myo-inositol(out) + H(+)(out) = myo-inositol(in) + H(+)(in). Its function is as follows. Transporter for myo-inositol. This chain is Myo-inositol transporter 2, found in Cryptococcus neoformans var. grubii serotype A (strain H99 / ATCC 208821 / CBS 10515 / FGSC 9487) (Filobasidiella neoformans var. grubii).